Here is a 137-residue protein sequence, read N- to C-terminus: Large ribosomal subunit protein eL28 (137 aa).

Position 2 is an N-acetylserine (serine 2). Glycyl lysine isopeptide (Lys-Gly) (interchain with G-Cter in SUMO2) cross-links involve residues lysine 58 and lysine 65. Serine 115 bears the Phosphoserine mark.

It belongs to the eukaryotic ribosomal protein eL28 family. In terms of assembly, component of the large ribosomal subunit.

The protein localises to the cytoplasm. Functionally, component of the large ribosomal subunit. The ribosome is a large ribonucleoprotein complex responsible for the synthesis of proteins in the cell. This is Large ribosomal subunit protein eL28 (RPL28) from Oryctolagus cuniculus (Rabbit).